The sequence spans 464 residues: tRNA-2-methylthio-N(6)-dimethylallyladenosine synthase (464 aa).

In terms of domain architecture, MTTase N-terminal spans 19 to 135 (GSYWITTFGC…LENLLERVDS (117 aa)). 6 residues coordinate [4Fe-4S] cluster: Cys-28, Cys-64, Cys-98, Cys-170, Cys-174, and Cys-177. A Radical SAM core domain is found at 156-393 (RDSTICGWVN…NELVEATSRK (238 aa)). The TRAM domain maps to 396-464 (QRYLNNTESV…SFSLSGQIYK (69 aa)).

This sequence belongs to the methylthiotransferase family. MiaB subfamily. Monomer. It depends on [4Fe-4S] cluster as a cofactor.

The protein resides in the cytoplasm. The enzyme catalyses N(6)-dimethylallyladenosine(37) in tRNA + (sulfur carrier)-SH + AH2 + 2 S-adenosyl-L-methionine = 2-methylsulfanyl-N(6)-dimethylallyladenosine(37) in tRNA + (sulfur carrier)-H + 5'-deoxyadenosine + L-methionine + A + S-adenosyl-L-homocysteine + 2 H(+). In terms of biological role, catalyzes the methylthiolation of N6-(dimethylallyl)adenosine (i(6)A), leading to the formation of 2-methylthio-N6-(dimethylallyl)adenosine (ms(2)i(6)A) at position 37 in tRNAs that read codons beginning with uridine. The polypeptide is tRNA-2-methylthio-N(6)-dimethylallyladenosine synthase (Prochlorococcus marinus (strain MIT 9515)).